The chain runs to 185 residues: Threonylcarbamoyl-AMP synthase (185 aa).

The region spanning 4–185 is the YrdC-like domain; sequence SWRVQQAARE…LATGNIVRPA (182 aa).

This sequence belongs to the SUA5 family. TsaC subfamily.

The protein localises to the cytoplasm. The enzyme catalyses L-threonine + hydrogencarbonate + ATP = L-threonylcarbamoyladenylate + diphosphate + H2O. Its function is as follows. Required for the formation of a threonylcarbamoyl group on adenosine at position 37 (t(6)A37) in tRNAs that read codons beginning with adenine. Catalyzes the conversion of L-threonine, HCO(3)(-)/CO(2) and ATP to give threonylcarbamoyl-AMP (TC-AMP) as the acyladenylate intermediate, with the release of diphosphate. This is Threonylcarbamoyl-AMP synthase from Pseudomonas fluorescens (strain Pf0-1).